The sequence spans 291 residues: MDGPFGFVVIDKPAGHTSHSCVSRLRRCYGLKRVGHGGTLDPAVTGVLPIALGPATRLLPYLPGDKTYRGVIQLGSITSSDDLEGELLRQAPWPDLQPEELEVALAPFRGPIQQRPPQVSAVHVDGERAHARARRGEQMVLPPRPVTIHRLQLLHWDPNQGQLTLEVHCSAGTYIRSLARDLGEQLGCGGCLAQLRRTQALGFLESQAQALPEADATPPPPLSPLLALEHLPRRQLTDSEEADWRCGRRLSLDPGPGDAVVVCNADGSMAGIGLRQEDDQLQPKVVFDASG.

Asp41 functions as the Nucleophile in the catalytic mechanism.

The protein belongs to the pseudouridine synthase TruB family. Type 1 subfamily.

The enzyme catalyses uridine(55) in tRNA = pseudouridine(55) in tRNA. Responsible for synthesis of pseudouridine from uracil-55 in the psi GC loop of transfer RNAs. The chain is tRNA pseudouridine synthase B from Parasynechococcus marenigrum (strain WH8102).